The following is a 146-amino-acid chain: Regulator of ribonuclease activity B (146 aa).

A disordered region spans residues 110–146 (WGTYFEDPDGEEEEGDEFDQDDEDGPADRDEVPATRH). Positions 115-134 (EDPDGEEEEGDEFDQDDEDG) are enriched in acidic residues. Over residues 135–146 (PADRDEVPATRH) the composition is skewed to basic and acidic residues.

Belongs to the RraB family. Interacts with the C-terminal region of Rne.

It is found in the cytoplasm. Globally modulates RNA abundance by binding to RNase E (Rne) and regulating its endonucleolytic activity. Can modulate Rne action in a substrate-dependent manner by altering the composition of the degradosome. In Sodalis glossinidius (strain morsitans), this protein is Regulator of ribonuclease activity B.